The following is an 843-amino-acid chain: Protein P (843 aa).

The terminal protein domain (TP) stretch occupies residues 1-177 (MPLSYQHFRR…FCGSPYSWEQ (177 aa)). The segment at 178 to 346 (ELQHGSTSLN…YCLSHIINLL (169 aa)) is spacer. The tract at residues 249-301 (TPTRWPSGVEPSGTGHSDNLATRSTSRFHQSEVRKETNPSLSTSKGHTSTGHA) is disordered. Composition is skewed to polar residues over residues 262 to 276 (TGHS…TSRF) and 286 to 299 (NPSL…TSTG). The interval 347–690 (EDWGPCYEHG…YMNLYPVARQ (344 aa)) is polymerase/reverse transcriptase domain (RT). In terms of domain architecture, Reverse transcriptase spans 357 to 600 (EHHIRTPRTP…YSLHFMGYII (244 aa)). Mg(2+)-binding residues include Asp429, Asp551, and Asp552.

The protein belongs to the hepadnaviridae P protein family.

It catalyses the reaction DNA(n) + a 2'-deoxyribonucleoside 5'-triphosphate = DNA(n+1) + diphosphate. The enzyme catalyses Endonucleolytic cleavage to 5'-phosphomonoester.. Activated by host HSP70 and HSP40 in vitro to be able to bind the epsilon loop of the pgRNA. Because deletion of the RNase H region renders the protein partly chaperone-independent, the chaperones may be needed indirectly to relieve occlusion of the RNA-binding site by this domain. Inhibited by several reverse-transcriptase inhibitors: Lamivudine, Adefovir and Entecavir. In terms of biological role, multifunctional enzyme that converts the viral RNA genome into dsDNA in viral cytoplasmic capsids. This enzyme displays a DNA polymerase activity that can copy either DNA or RNA templates, and a ribonuclease H (RNase H) activity that cleaves the RNA strand of RNA-DNA heteroduplexes in a partially processive 3'- to 5'-endonucleasic mode. Neo-synthesized pregenomic RNA (pgRNA) are encapsidated together with the P protein, and reverse-transcribed inside the nucleocapsid. Initiation of reverse-transcription occurs first by binding the epsilon loop on the pgRNA genome, and is initiated by protein priming, thereby the 5'-end of (-)DNA is covalently linked to P protein. Partial (+)DNA is synthesized from the (-)DNA template and generates the relaxed circular DNA (RC-DNA) genome. After budding and infection, the RC-DNA migrates in the nucleus, and is converted into a plasmid-like covalently closed circular DNA (cccDNA). The activity of P protein does not seem to be necessary for cccDNA generation, and is presumably released from (+)DNA by host nuclear DNA repair machinery. This is Protein P from Homo sapiens (Human).